Reading from the N-terminus, the 495-residue chain is Trigger factor (495 aa).

A PPIase FKBP-type domain is found at 169–254 (GDRVAMDYVG…VKDVAAPGAV (86 aa)). Residues 441–495 (LAEDEGEAKAETKKAAPKKKAAAKTEAAEAGEGEEAAAPKKKAAPKKKAADESAE) are disordered.

This sequence belongs to the FKBP-type PPIase family. Tig subfamily.

It is found in the cytoplasm. The enzyme catalyses [protein]-peptidylproline (omega=180) = [protein]-peptidylproline (omega=0). In terms of biological role, involved in protein export. Acts as a chaperone by maintaining the newly synthesized protein in an open conformation. Functions as a peptidyl-prolyl cis-trans isomerase. This is Trigger factor from Rhizobium etli (strain CIAT 652).